Reading from the N-terminus, the 507-residue chain is ATP synthase subunit beta (507 aa).

The interval 1–22 (MSSLANKAKSKGKSSKSKSNVN) is disordered. 183–190 (GGAGVGKT) is an ATP binding site.

The protein belongs to the ATPase alpha/beta chains family. As to quaternary structure, F-type ATPases have 2 components, CF(1) - the catalytic core - and CF(0) - the membrane proton channel. CF(1) has five subunits: alpha(3), beta(3), gamma(1), delta(1), epsilon(1). CF(0) has three main subunits: a(1), b(2) and c(9-12). The alpha and beta chains form an alternating ring which encloses part of the gamma chain. CF(1) is attached to CF(0) by a central stalk formed by the gamma and epsilon chains, while a peripheral stalk is formed by the delta and b chains.

It is found in the cell inner membrane. The enzyme catalyses ATP + H2O + 4 H(+)(in) = ADP + phosphate + 5 H(+)(out). Its function is as follows. Produces ATP from ADP in the presence of a proton gradient across the membrane. The catalytic sites are hosted primarily by the beta subunits. This is ATP synthase subunit beta from Ehrlichia canis (strain Jake).